The primary structure comprises 130 residues: Small ribosomal subunit protein uS9 (130 aa).

Over residues 99 to 110 the composition is skewed to basic and acidic residues; sequence KKAGFLTRDPRM. The tract at residues 99–130 is disordered; it reads KKAGFLTRDPRMKERKKYGLKKARRAPQFSKR. Basic residues predominate over residues 111–130; that stretch reads KERKKYGLKKARRAPQFSKR.

The protein belongs to the universal ribosomal protein uS9 family.

The chain is Small ribosomal subunit protein uS9 from Clostridium botulinum (strain Eklund 17B / Type B).